The chain runs to 239 residues: Protein GrpE (239 aa).

Disordered stretches follow at residues 1–54 (MIEN…ELKN) and 208–239 (SMGP…SEDV). A compositionally biased stretch (polar residues) spans 19 to 42 (QDNALENVSSAQELTTENNELSSQ). A compositionally biased stretch (basic and acidic residues) spans 43–53 (KTEEINTEELK). Acidic residues predominate over residues 228 to 239 (DIDSEENTSEDV).

Belongs to the GrpE family. As to quaternary structure, homodimer.

Its subcellular location is the cytoplasm. In terms of biological role, participates actively in the response to hyperosmotic and heat shock by preventing the aggregation of stress-denatured proteins, in association with DnaK and GrpE. It is the nucleotide exchange factor for DnaK and may function as a thermosensor. Unfolded proteins bind initially to DnaJ; upon interaction with the DnaJ-bound protein, DnaK hydrolyzes its bound ATP, resulting in the formation of a stable complex. GrpE releases ADP from DnaK; ATP binding to DnaK triggers the release of the substrate protein, thus completing the reaction cycle. Several rounds of ATP-dependent interactions between DnaJ, DnaK and GrpE are required for fully efficient folding. This chain is Protein GrpE, found in Prochlorococcus marinus (strain AS9601).